The sequence spans 126 residues: Small ribosomal subunit protein uS8 (126 aa).

Belongs to the universal ribosomal protein uS8 family. In terms of assembly, part of the 30S ribosomal subunit. Contacts proteins S5 and S12.

Its function is as follows. One of the primary rRNA binding proteins, it binds directly to 16S rRNA central domain where it helps coordinate assembly of the platform of the 30S subunit. This is Small ribosomal subunit protein uS8 from Oleidesulfovibrio alaskensis (strain ATCC BAA-1058 / DSM 17464 / G20) (Desulfovibrio alaskensis).